Here is a 225-residue protein sequence, read N- to C-terminus: Protein-L-isoaspartate O-methyltransferase (225 aa).

Ser-75 is an active-site residue.

The protein belongs to the methyltransferase superfamily. L-isoaspartyl/D-aspartyl protein methyltransferase family.

It localises to the cytoplasm. The enzyme catalyses [protein]-L-isoaspartate + S-adenosyl-L-methionine = [protein]-L-isoaspartate alpha-methyl ester + S-adenosyl-L-homocysteine. Catalyzes the methyl esterification of L-isoaspartyl residues in peptides and proteins that result from spontaneous decomposition of normal L-aspartyl and L-asparaginyl residues. It plays a role in the repair and/or degradation of damaged proteins. This is Protein-L-isoaspartate O-methyltransferase from Xylella fastidiosa (strain M23).